Here is a 380-residue protein sequence, read N- to C-terminus: Cytochrome b (380 aa).

Transmembrane regions (helical) follow at residues 34–54, 78–99, 114–134, and 179–199; these read FGSL…LLAT, WLIR…YLHI, WNTG…GYVL, and FFAL…IHLT. Heme b-binding residues include histidine 84 and histidine 98. Heme b is bound by residues histidine 183 and histidine 197. An a ubiquinone-binding site is contributed by histidine 202. 4 helical membrane-spanning segments follow: residues 227–247, 289–309, 321–341, and 348–368; these read LKDI…ALFS, LGGV…PLLH, LSQF…WVGS, and FIII…LLFP.

Belongs to the cytochrome b family. The cytochrome bc1 complex contains 11 subunits: 3 respiratory subunits (MT-CYB, CYC1 and UQCRFS1), 2 core proteins (UQCRC1 and UQCRC2) and 6 low-molecular weight proteins (UQCRH/QCR6, UQCRB/QCR7, UQCRQ/QCR8, UQCR10/QCR9, UQCR11/QCR10 and a cleavage product of UQCRFS1). This cytochrome bc1 complex then forms a dimer. Heme b serves as cofactor.

It is found in the mitochondrion inner membrane. Functionally, component of the ubiquinol-cytochrome c reductase complex (complex III or cytochrome b-c1 complex) that is part of the mitochondrial respiratory chain. The b-c1 complex mediates electron transfer from ubiquinol to cytochrome c. Contributes to the generation of a proton gradient across the mitochondrial membrane that is then used for ATP synthesis. In Pinguinus impennis (Great auk), this protein is Cytochrome b (MT-CYB).